We begin with the raw amino-acid sequence, 347 residues long: Dual-specificity RNA methyltransferase RlmN (347 aa).

Glu93 functions as the Proton acceptor in the catalytic mechanism. In terms of domain architecture, Radical SAM core spans Asp99–Asp327. Cys106 and Cys332 are disulfide-bonded. [4Fe-4S] cluster is bound by residues Cys113, Cys117, and Cys120. S-adenosyl-L-methionine-binding positions include Gly158–Glu159, Ser190, Ser213–Asn215, and Asn289. Cys332 acts as the S-methylcysteine intermediate in catalysis.

Belongs to the radical SAM superfamily. RlmN family. [4Fe-4S] cluster serves as cofactor.

It is found in the cytoplasm. The catalysed reaction is adenosine(2503) in 23S rRNA + 2 reduced [2Fe-2S]-[ferredoxin] + 2 S-adenosyl-L-methionine = 2-methyladenosine(2503) in 23S rRNA + 5'-deoxyadenosine + L-methionine + 2 oxidized [2Fe-2S]-[ferredoxin] + S-adenosyl-L-homocysteine. It catalyses the reaction adenosine(37) in tRNA + 2 reduced [2Fe-2S]-[ferredoxin] + 2 S-adenosyl-L-methionine = 2-methyladenosine(37) in tRNA + 5'-deoxyadenosine + L-methionine + 2 oxidized [2Fe-2S]-[ferredoxin] + S-adenosyl-L-homocysteine. Functionally, specifically methylates position 2 of adenine 2503 in 23S rRNA and position 2 of adenine 37 in tRNAs. m2A2503 modification seems to play a crucial role in the proofreading step occurring at the peptidyl transferase center and thus would serve to optimize ribosomal fidelity. The sequence is that of Dual-specificity RNA methyltransferase RlmN from Pelobacter propionicus (strain DSM 2379 / NBRC 103807 / OttBd1).